The chain runs to 106 residues: Transcriptional and immune response regulator (106 aa).

In terms of assembly, monomer. Interacts with NOTCH2 (via ANK repeats), the interaction inhibits the nuclear translocation of NOTCH2 N2ICD. Interacts (C-terminus) with CBY1 (C-terminus), TCIM competes with CTNNB1 for the interaction with CBY1.

It localises to the cytoplasm. It is found in the nucleus. The protein localises to the nucleolus. Its subcellular location is the nucleus speckle. In terms of biological role, seems to be involved in the regulation of cell growth an differentiation, may play different and opposite roles depending on the tissue or cell type. May enhance the WNT-CTNNB1 pathway by relieving antagonistic activity of CBY1. Enhances the proliferation of follicular dendritic cells. Plays a role in the mitogen-activated MAPK2/3 signaling pathway, positively regulates G1-to-S-phase transition of the cell cycle. In endothelial cells, enhances key inflammatory mediators and inflammatory response through the modulation of NF-kappaB transcriptional regulatory activity. Involved in the regulation of heat shock response, seems to play a positive feedback with HSF1 to modulate heat-shock downstream gene expression. Plays a role in the regulation of hematopoiesis even if the mechanisms are unknown. In cancers such as thyroid or lung cancer, it has been described as promoter of cell proliferation, G1-to-S-phase transition and inhibitor of apoptosis. However, it negatively regulates self-renewal of liver cancer cells via suppresion of NOTCH2 signaling. This Bos taurus (Bovine) protein is Transcriptional and immune response regulator (TCIM).